Here is a 401-residue protein sequence, read N- to C-terminus: Putative phosphatidylinositol 4-phosphate 5-kinase 11 (401 aa).

One can recognise a PIPK domain in the interval 1–390 (MELRATVENR…RFQDFVSNIF (390 aa)). Residues 242-260 (SFKSNSTKSMKTASSSPDR) show a composition bias toward polar residues. Residues 242–268 (SFKSNSTKSMKTASSSPDRSSVAMYSC) are disordered. Residues 350–371 (YGMKKRIEHCYKSIQYNSNSIS) are activation loop.

The catalysed reaction is a 1,2-diacyl-sn-glycero-3-phospho-(1D-myo-inositol 4-phosphate) + ATP = a 1,2-diacyl-sn-glycero-3-phospho-(1D-myo-inositol-4,5-bisphosphate) + ADP + H(+). This Arabidopsis thaliana (Mouse-ear cress) protein is Putative phosphatidylinositol 4-phosphate 5-kinase 11 (PIP5K11).